Here is a 655-residue protein sequence, read N- to C-terminus: p-hydroxybenzoic acid efflux pump subunit AaeB (655 aa).

The Periplasmic segment spans residues 1-12; that stretch reads MGIFSIANQHIR. The helical transmembrane segment at 13–33 threads the bilayer; the sequence is FAVKLATAIVLALFVGFHFQL. Residues 34–37 are Cytoplasmic-facing; sequence ETPR. A helical membrane pass occupies residues 38-58; sequence WAVLTAAIVAAGTAFAAGGEP. Residues 59-68 lie on the Periplasmic side of the membrane; sequence YSGAIRYRGF. The helical transmembrane segment at 69–89 threads the bilayer; that stretch reads LRIIGTFIGCIAGLVIIIAMI. The Cytoplasmic portion of the chain corresponds to 90–92; it reads RAP. A helical membrane pass occupies residues 93–113; it reads LLMILVCCIWAGFCTWISSLV. The Periplasmic segment spans residues 114-120; it reads RIENSYA. Residues 121–141 traverse the membrane as a helical segment; sequence WGLAGYTALIIVITIQPEPLL. Over 142-151 the chain is Cytoplasmic; the sequence is TPQFAVERCS. The helical transmembrane segment at 152–172 threads the bilayer; that stretch reads EIVIGIVCAIMADLLFSPRSI. Residues 173–369 lie on the Periplasmic side of the membrane; it reads KQEVDRELES…RTTLSCILGT (197 aa). A helical membrane pass occupies residues 370–390; the sequence is LFWLWTGWTSGSGAMVMIAVV. At 391–406 the chain is on the cytoplasmic side; the sequence is TSLAMRLPNPRMVAID. A helical transmembrane segment spans residues 407–427; that stretch reads FIYGTLAALPLGLLYFLVIIP. Topologically, residues 428–430 are periplasmic; sequence NTQ. A helical transmembrane segment spans residues 431 to 451; it reads QSMLLLCISLAVLGFFLGIEV. The Cytoplasmic segment spans residues 452–458; the sequence is QKRRLGS. A helical transmembrane segment spans residues 459 to 479; the sequence is MGALASTINIIVLDNPMTFHF. Over 480-481 the chain is Periplasmic; that stretch reads SQ. The helical transmembrane segment at 482-502 threads the bilayer; sequence FLDSALGQIVGCVLAFTVILL. Topologically, residues 503–655 are cytoplasmic; it reads VRDKSRDRTG…HKYQHALTDS (153 aa).

This sequence belongs to the aromatic acid exporter ArAE (TC 2.A.85) family.

The protein resides in the cell inner membrane. In terms of biological role, forms an efflux pump with AaeA. Could function as a metabolic relief valve, allowing to eliminate certain compounds when they accumulate to high levels in the cell. Substrates are p-hydroxybenzoic acid (pHBA), 6-hydroxy-2-naphthoic and 2-hydroxycinnamate. The polypeptide is p-hydroxybenzoic acid efflux pump subunit AaeB (Escherichia coli (strain K12)).